A 362-amino-acid chain; its full sequence is Dihydroorotate dehydrogenase (quinone) (362 aa).

FMN contacts are provided by residues 62-66 (AGYDK) and Thr-86. Lys-66 is a binding site for substrate. 111–115 (NRLGF) is a substrate binding site. FMN contacts are provided by Asn-139 and Asn-170. Position 170 (Asn-170) interacts with substrate. Ser-173 (nucleophile) is an active-site residue. Asn-175 serves as a coordination point for substrate. Residues Lys-215 and Ser-243 each coordinate FMN. 244–245 (NT) serves as a coordination point for substrate. FMN is bound by residues Gly-266, Gly-295, and 316-317 (YS).

The protein belongs to the dihydroorotate dehydrogenase family. Type 2 subfamily. In terms of assembly, monomer. FMN serves as cofactor.

The protein resides in the cell membrane. The enzyme catalyses (S)-dihydroorotate + a quinone = orotate + a quinol. It functions in the pathway pyrimidine metabolism; UMP biosynthesis via de novo pathway; orotate from (S)-dihydroorotate (quinone route): step 1/1. Catalyzes the conversion of dihydroorotate to orotate with quinone as electron acceptor. The sequence is that of Dihydroorotate dehydrogenase (quinone) from Rhizobium johnstonii (strain DSM 114642 / LMG 32736 / 3841) (Rhizobium leguminosarum bv. viciae).